Consider the following 307-residue polypeptide: Pseudouridine-5'-phosphate glycosidase (307 aa).

Glutamate 28 serves as the catalytic Proton donor. Substrate contacts are provided by lysine 89 and valine 109. Aspartate 141 contacts Mn(2+). 143-145 (SAD) serves as a coordination point for substrate. Lysine 162 acts as the Nucleophile in catalysis.

The protein belongs to the pseudouridine-5'-phosphate glycosidase family. In terms of assembly, homotrimer. The cofactor is Mn(2+).

The catalysed reaction is D-ribose 5-phosphate + uracil = psi-UMP + H2O. In terms of biological role, catalyzes the reversible cleavage of pseudouridine 5'-phosphate (PsiMP) to ribose 5-phosphate and uracil. Functions biologically in the cleavage direction, as part of a pseudouridine degradation pathway. The protein is Pseudouridine-5'-phosphate glycosidase of Staphylococcus aureus (strain MW2).